Reading from the N-terminus, the 198-residue chain is Recombination protein RecR (198 aa).

A C4-type zinc finger spans residues 57–72 (CRVCANIADENPCGIC). The Toprim domain maps to 80 to 175 (GLICVVERPR…RVTRLAFGLP (96 aa)).

This sequence belongs to the RecR family.

Functionally, may play a role in DNA repair. It seems to be involved in an RecBC-independent recombinational process of DNA repair. It may act with RecF and RecO. The chain is Recombination protein RecR from Desulforudis audaxviator (strain MP104C).